The sequence spans 330 residues: tRNA(Ile)-lysidine synthase (330 aa).

An ATP-binding site is contributed by 31–36; it reads SGGQDS.

The protein belongs to the tRNA(Ile)-lysidine synthase family.

The protein resides in the cytoplasm. It catalyses the reaction cytidine(34) in tRNA(Ile2) + L-lysine + ATP = lysidine(34) in tRNA(Ile2) + AMP + diphosphate + H(+). In terms of biological role, ligates lysine onto the cytidine present at position 34 of the AUA codon-specific tRNA(Ile) that contains the anticodon CAU, in an ATP-dependent manner. Cytidine is converted to lysidine, thus changing the amino acid specificity of the tRNA from methionine to isoleucine. The polypeptide is tRNA(Ile)-lysidine synthase (Synechocystis sp. (strain ATCC 27184 / PCC 6803 / Kazusa)).